Reading from the N-terminus, the 71-residue chain is MAVKKGDMVRAIREKLENSLEAKASDTRFPPYLFDSKGEIVDIKGDYALIKFGKVPTPNVWLRVDQLEEFK.

It belongs to the complex I NdhO subunit family. In terms of assembly, NDH-1 can be composed of about 15 different subunits; different subcomplexes with different compositions have been identified which probably have different functions.

The protein resides in the cellular thylakoid membrane. The catalysed reaction is a plastoquinone + NADH + (n+1) H(+)(in) = a plastoquinol + NAD(+) + n H(+)(out). It catalyses the reaction a plastoquinone + NADPH + (n+1) H(+)(in) = a plastoquinol + NADP(+) + n H(+)(out). In terms of biological role, NDH-1 shuttles electrons from an unknown electron donor, via FMN and iron-sulfur (Fe-S) centers, to quinones in the respiratory and/or the photosynthetic chain. The immediate electron acceptor for the enzyme in this species is believed to be plastoquinone. Couples the redox reaction to proton translocation, and thus conserves the redox energy in a proton gradient. Cyanobacterial NDH-1 also plays a role in inorganic carbon-concentration. This Nostoc punctiforme (strain ATCC 29133 / PCC 73102) protein is NAD(P)H-quinone oxidoreductase subunit O.